Consider the following 92-residue polypeptide: Small ribosomal subunit protein uS19c (92 aa).

This sequence belongs to the universal ribosomal protein uS19 family.

The protein localises to the plastid. It localises to the chloroplast. In terms of biological role, protein S19 forms a complex with S13 that binds strongly to the 16S ribosomal RNA. This is Small ribosomal subunit protein uS19c from Ceratophyllum demersum (Rigid hornwort).